We begin with the raw amino-acid sequence, 279 residues long: Nucleotide-binding protein THA_1518 (279 aa).

9 to 16 (GLSGAGKS) lines the ATP pocket. 57–60 (DARS) serves as a coordination point for GTP.

It belongs to the RapZ-like family.

In terms of biological role, displays ATPase and GTPase activities. In Thermosipho africanus (strain TCF52B), this protein is Nucleotide-binding protein THA_1518.